We begin with the raw amino-acid sequence, 335 residues long: tRNA N6-adenosine threonylcarbamoyltransferase (335 aa).

Fe cation is bound by residues His-110 and His-114. Residues 132 to 136 (LVSGG), Asp-165, Gly-178, and Asn-271 each bind substrate. A Fe cation-binding site is contributed by Asp-299.

This sequence belongs to the KAE1 / TsaD family. It depends on Fe(2+) as a cofactor.

The protein resides in the cytoplasm. It carries out the reaction L-threonylcarbamoyladenylate + adenosine(37) in tRNA = N(6)-L-threonylcarbamoyladenosine(37) in tRNA + AMP + H(+). Its function is as follows. Required for the formation of a threonylcarbamoyl group on adenosine at position 37 (t(6)A37) in tRNAs that read codons beginning with adenine. Is involved in the transfer of the threonylcarbamoyl moiety of threonylcarbamoyl-AMP (TC-AMP) to the N6 group of A37, together with TsaE and TsaB. TsaD likely plays a direct catalytic role in this reaction. This chain is tRNA N6-adenosine threonylcarbamoyltransferase, found in Campylobacter jejuni subsp. doylei (strain ATCC BAA-1458 / RM4099 / 269.97).